Consider the following 119-residue polypeptide: uncharacterized protein (119 aa).

Positions 64–119 (SAPLGLKEVQKKSNEGLNEVQGAADINKQKRPANSQDSSSVEGDIQNFLEKVTGKN) are disordered. Over residues 95–104 (PANSQDSSSV) the composition is skewed to polar residues.

This is an uncharacterized protein from Nostoc sp. (strain PCC 7120 / SAG 25.82 / UTEX 2576).